Reading from the N-terminus, the 351-residue chain is Autoinducer 2 import system permease protein LsrC (351 aa).

The next 9 membrane-spanning stretches (helical) occupy residues 14–34 (LLAI…YFSL), 39–59 (MIFS…LVML), 70–90 (ITGL…GLVA), 93–113 (LFAL…VTWL), 115–135 (IPAI…MLLL), 155–175 (ILFS…AMAW), 213–233 (MNGV…GFIP), 252–272 (GISL…AFLL), and 284–304 (LPAW…LVFD).

The protein belongs to the binding-protein-dependent transport system permease family. AraH/RbsC subfamily. In terms of assembly, the complex is composed of two ATP-binding proteins (LsrA), two transmembrane proteins (LsrC and LsrD) and a solute-binding protein (LsrB).

The protein resides in the cell inner membrane. Functionally, part of the ABC transporter complex LsrABCD involved in autoinducer 2 (AI-2) import. Probably responsible for the translocation of the substrate across the membrane. The sequence is that of Autoinducer 2 import system permease protein LsrC (lsrC) from Yersinia pseudotuberculosis serotype O:3 (strain YPIII).